The primary structure comprises 443 residues: Thymidine phosphorylase (443 aa).

The protein belongs to the thymidine/pyrimidine-nucleoside phosphorylase family. Homodimer.

The enzyme catalyses thymidine + phosphate = 2-deoxy-alpha-D-ribose 1-phosphate + thymine. It participates in pyrimidine metabolism; dTMP biosynthesis via salvage pathway; dTMP from thymine: step 1/2. In terms of biological role, the enzymes which catalyze the reversible phosphorolysis of pyrimidine nucleosides are involved in the degradation of these compounds and in their utilization as carbon and energy sources, or in the rescue of pyrimidine bases for nucleotide synthesis. This chain is Thymidine phosphorylase, found in Shewanella woodyi (strain ATCC 51908 / MS32).